Here is a 353-residue protein sequence, read N- to C-terminus: tRNA pseudouridine synthase B (353 aa).

Asp-39 acts as the Nucleophile in catalysis.

It belongs to the pseudouridine synthase TruB family. Type 1 subfamily.

The enzyme catalyses uridine(55) in tRNA = pseudouridine(55) in tRNA. Functionally, responsible for synthesis of pseudouridine from uracil-55 in the psi GC loop of transfer RNAs. The sequence is that of tRNA pseudouridine synthase B from Wolbachia pipientis subsp. Culex pipiens (strain wPip).